A 1394-amino-acid polypeptide reads, in one-letter code: DNA-directed RNA polymerase subunit beta (1394 aa).

The protein belongs to the RNA polymerase beta chain family. The RNAP catalytic core consists of 2 alpha, 1 beta, 1 beta' and 1 omega subunit. When a sigma factor is associated with the core the holoenzyme is formed, which can initiate transcription.

The catalysed reaction is RNA(n) + a ribonucleoside 5'-triphosphate = RNA(n+1) + diphosphate. Functionally, DNA-dependent RNA polymerase catalyzes the transcription of DNA into RNA using the four ribonucleoside triphosphates as substrates. This is DNA-directed RNA polymerase subunit beta from Anaplasma phagocytophilum (Ehrlichia phagocytophila).